The chain runs to 32 residues: ilv operon leader peptide (32 aa).

Functionally, this protein is involved in control of the biosynthesis of isoleucine, leucine, and valine. This is ilv operon leader peptide (ivbL) from Escherichia coli (strain K12).